Consider the following 602-residue polypeptide: Elongation factor 4 (602 aa).

The tr-type G domain occupies 8–189; it reads KNIRNFSIIA…KIITTIPAPS (182 aa). Residues 20–25 and 136–139 contribute to the GTP site; these read DHGKST and NKID.

This sequence belongs to the TRAFAC class translation factor GTPase superfamily. Classic translation factor GTPase family. LepA subfamily.

The protein localises to the cell inner membrane. The enzyme catalyses GTP + H2O = GDP + phosphate + H(+). Functionally, required for accurate and efficient protein synthesis under certain stress conditions. May act as a fidelity factor of the translation reaction, by catalyzing a one-codon backward translocation of tRNAs on improperly translocated ribosomes. Back-translocation proceeds from a post-translocation (POST) complex to a pre-translocation (PRE) complex, thus giving elongation factor G a second chance to translocate the tRNAs correctly. Binds to ribosomes in a GTP-dependent manner. In Helicobacter pylori (strain HPAG1), this protein is Elongation factor 4.